The following is a 273-amino-acid chain: Undecaprenyl-diphosphatase (273 aa).

7 consecutive transmembrane segments (helical) span residues Gly13 to Asn35, Val45 to Tyr62, Phe82 to Lys102, Leu108 to Val128, Thr186 to Leu206, Leu219 to Leu239, and Phe250 to Ile270.

Belongs to the UppP family.

It is found in the cell inner membrane. The catalysed reaction is di-trans,octa-cis-undecaprenyl diphosphate + H2O = di-trans,octa-cis-undecaprenyl phosphate + phosphate + H(+). Its function is as follows. Catalyzes the dephosphorylation of undecaprenyl diphosphate (UPP). Confers resistance to bacitracin. The chain is Undecaprenyl-diphosphatase from Neisseria meningitidis serogroup A / serotype 4A (strain DSM 15465 / Z2491).